Here is a 418-residue protein sequence, read N- to C-terminus: Tyrosine--tRNA ligase (418 aa).

Position 34 (tyrosine 34) interacts with L-tyrosine. Positions 39–48 (PTGDSMHIGH) match the 'HIGH' region motif. L-tyrosine-binding residues include tyrosine 166 and glutamine 170. Positions 228–232 (KFGKT) match the 'KMSKS' region motif. An ATP-binding site is contributed by lysine 231. The region spanning 350 to 418 (QNIVLWLVDA…KKRYFLAHVK (69 aa)) is the S4 RNA-binding domain.

It belongs to the class-I aminoacyl-tRNA synthetase family. TyrS type 1 subfamily. As to quaternary structure, homodimer.

The protein resides in the cytoplasm. It catalyses the reaction tRNA(Tyr) + L-tyrosine + ATP = L-tyrosyl-tRNA(Tyr) + AMP + diphosphate + H(+). Catalyzes the attachment of tyrosine to tRNA(Tyr) in a two-step reaction: tyrosine is first activated by ATP to form Tyr-AMP and then transferred to the acceptor end of tRNA(Tyr). The sequence is that of Tyrosine--tRNA ligase from Lactiplantibacillus plantarum (strain ATCC BAA-793 / NCIMB 8826 / WCFS1) (Lactobacillus plantarum).